Reading from the N-terminus, the 655-residue chain is tRNA 5-methylaminomethyl-2-thiouridine biosynthesis bifunctional protein MnmC (655 aa).

The segment at 1 to 236 (MTDPLVPAVL…KRAMLVGRFA (236 aa)) is tRNA (mnm(5)s(2)U34)-methyltransferase. The segment at 260-655 (IGTGLAGCAA…LRALRQGTAS (396 aa)) is FAD-dependent cmnm(5)s(2)U34 oxidoreductase.

The protein in the N-terminal section; belongs to the methyltransferase superfamily. tRNA (mnm(5)s(2)U34)-methyltransferase family. It in the C-terminal section; belongs to the DAO family. Requires FAD as cofactor.

The protein resides in the cytoplasm. It carries out the reaction 5-aminomethyl-2-thiouridine(34) in tRNA + S-adenosyl-L-methionine = 5-methylaminomethyl-2-thiouridine(34) in tRNA + S-adenosyl-L-homocysteine + H(+). In terms of biological role, catalyzes the last two steps in the biosynthesis of 5-methylaminomethyl-2-thiouridine (mnm(5)s(2)U) at the wobble position (U34) in tRNA. Catalyzes the FAD-dependent demodification of cmnm(5)s(2)U34 to nm(5)s(2)U34, followed by the transfer of a methyl group from S-adenosyl-L-methionine to nm(5)s(2)U34, to form mnm(5)s(2)U34. The protein is tRNA 5-methylaminomethyl-2-thiouridine biosynthesis bifunctional protein MnmC of Paraburkholderia phymatum (strain DSM 17167 / CIP 108236 / LMG 21445 / STM815) (Burkholderia phymatum).